Consider the following 434-residue polypeptide: Beta-enolase (434 aa).

Ala2 bears the N-acetylalanine mark. A Phosphothreonine modification is found at Thr72. Residues Ser83 and Ser157 each carry the phosphoserine modification. His158 and Glu167 together coordinate substrate. Ser176 carries the post-translational modification Phosphoserine. Thr205 carries the post-translational modification Phosphothreonine. Glu210 acts as the Proton donor in catalysis. Residue Thr229 is modified to Phosphothreonine. A Phosphotyrosine modification is found at Tyr236. Asp245 is a binding site for Mg(2+). The residue at position 263 (Ser263) is a Phosphoserine. Substrate-binding residues include Glu293 and Asp318. Mg(2+)-binding residues include Glu293 and Asp318. Lys343 serves as the catalytic Proton acceptor. Residues 370 to 373 (SHRS) and Lys394 contribute to the substrate site.

It belongs to the enolase family. As to quaternary structure, mammalian enolase is composed of 3 isozyme subunits, alpha, beta and gamma, which can form homodimers or heterodimers which are cell-type and development-specific. Interacts with PNKD. It depends on Mg(2+) as a cofactor.

It localises to the cytoplasm. The enzyme catalyses (2R)-2-phosphoglycerate = phosphoenolpyruvate + H2O. The protein operates within carbohydrate degradation; glycolysis; pyruvate from D-glyceraldehyde 3-phosphate: step 4/5. Glycolytic enzyme that catalyzes the conversion of 2-phosphoglycerate to phosphoenolpyruvate. Appears to have a function in striated muscle development and regeneration. The sequence is that of Beta-enolase (ENO3) from Bos taurus (Bovine).